We begin with the raw amino-acid sequence, 303 residues long: Bifunctional protein FolD (303 aa).

NADP(+)-binding positions include 165 to 167 (GRS), serine 190, and isoleucine 231.

This sequence belongs to the tetrahydrofolate dehydrogenase/cyclohydrolase family. In terms of assembly, homodimer.

The catalysed reaction is (6R)-5,10-methylene-5,6,7,8-tetrahydrofolate + NADP(+) = (6R)-5,10-methenyltetrahydrofolate + NADPH. The enzyme catalyses (6R)-5,10-methenyltetrahydrofolate + H2O = (6R)-10-formyltetrahydrofolate + H(+). Its pathway is one-carbon metabolism; tetrahydrofolate interconversion. Functionally, catalyzes the oxidation of 5,10-methylenetetrahydrofolate to 5,10-methenyltetrahydrofolate and then the hydrolysis of 5,10-methenyltetrahydrofolate to 10-formyltetrahydrofolate. The polypeptide is Bifunctional protein FolD (Prochlorococcus marinus (strain NATL2A)).